Here is a 347-residue protein sequence, read N- to C-terminus: MNPLALSLILTTLLAGTLITMMSSHWLTAWMGLEMNMLTMIPILMKTTNPRSTEAATKYFMTQATASMMLMMALTINLMYSGQWSIMKMTNPVASNVALMALMTKLGSAPFHFWVPEVTQGVELTSGMILLTWQKLAPLSLLYQMATYTNTNLIYLSGLLSILIGGWGGLNQTQLRKILAYSSISHMGWMLIILPFNPTLTLLNLAIYILLTLSIFMILANTLTTSMSSLTLMWNKTPAMTIMLMTTLLSLGGLPPLSGFTPKWLMIHELTKNNSIIMPLTMAIMTLLNMYFYMRLIYYSSLTILPSTNNMKMTWQFTSTKHTMMLPTLITLSNMLLPLTPMISMLE.

Helical transmembrane passes span 3 to 23, 25 to 45, 59 to 79, 93 to 115, 150 to 170, 178 to 198, 200 to 220, 240 to 260, 274 to 294, and 326 to 346; these read PLALSLILTTLLAGTLITMMS, HWLTAWMGLEMNMLTMIPILM, YFMTQATASMMLMMALTINLM, VASNVALMALMTKLGSAPFHFWV, NTNLIYLSGLLSILIGGWGGL, ILAYSSISHMGWMLIILPFNP, LTLLNLAIYILLTLSIFMILA, MTIMLMTTLLSLGGLPPLSGF, NSIIMPLTMAIMTLLNMYFYM, and LPTLITLSNMLLPLTPMISML.

It belongs to the complex I subunit 2 family. In terms of assembly, core subunit of respiratory chain NADH dehydrogenase (Complex I) which is composed of 45 different subunits. Interacts with TMEM242.

It is found in the mitochondrion inner membrane. It catalyses the reaction a ubiquinone + NADH + 5 H(+)(in) = a ubiquinol + NAD(+) + 4 H(+)(out). Core subunit of the mitochondrial membrane respiratory chain NADH dehydrogenase (Complex I) which catalyzes electron transfer from NADH through the respiratory chain, using ubiquinone as an electron acceptor. Essential for the catalytic activity and assembly of complex I. The polypeptide is NADH-ubiquinone oxidoreductase chain 2 (Mammuthus primigenius (Siberian woolly mammoth)).